The following is a 73-amino-acid chain: Antimicrobial peptide 6 (73 aa).

Residues 1–22 form the signal peptide; sequence MQIKHLITLFFLVLIVADQCSA. Residues 45–73 constitute a propeptide that is removed on maturation; that stretch reads EISTQIDQYRNLQKREAELEELLDRLPMY.

It belongs to the non-disulfide-bridged peptide (NDBP) superfamily. Short antimicrobial peptide (group 4) family. In terms of tissue distribution, expressed by the venom gland.

Its subcellular location is the secreted. Its function is as follows. Antibacterial peptide. The chain is Antimicrobial peptide 6 from Tityus costatus (Brazilian scorpion).